The sequence spans 437 residues: GTPase Der (437 aa).

EngA-type G domains follow at residues 3-168 (PLIA…PCPE) and 178-353 (IKLA…LNRR). Residues 9–16 (GRPNVGKS), 56–60 (DTGGY), 120–123 (NKVD), 184–191 (GRPNVGKS), 231–235 (DTAGL), and 296–299 (NKWD) each bind GTP. Positions 354 to 437 (QKISTSNLNR…IPITMRFLRK (84 aa)) constitute a KH-like domain.

The protein belongs to the TRAFAC class TrmE-Era-EngA-EngB-Septin-like GTPase superfamily. EngA (Der) GTPase family. As to quaternary structure, associates with the 50S ribosomal subunit.

Its function is as follows. GTPase that plays an essential role in the late steps of ribosome biogenesis. The chain is GTPase Der from Chlorobaculum tepidum (strain ATCC 49652 / DSM 12025 / NBRC 103806 / TLS) (Chlorobium tepidum).